The primary structure comprises 78 residues: Calcium/calmodulin-dependent protein kinase II inhibitor 1 (78 aa).

Residues 41 to 68 are CAMK2 inhibitory domain; that stretch reads NKRPPKLGQIGRSKRVVIEDDRIDDVLK.

It belongs to the CAMK2N family. As to quaternary structure, interacts with CAMK2B; the presence of Ca(2+)/calmodulin increases the interaction but is not essential. Interacts with CAMK2A; this interaction requires CAMK2A activation by Ca(2+).

Its subcellular location is the synapse. It is found in the cell projection. It localises to the dendrite. The protein resides in the postsynaptic density. Functionally, potent and specific inhibitor of CaM-kinase II (CAMK2). Plays a role in the maintenance of long-term retrieval-induced memory in response to contextual fear. Modulates blood pressure and vascular reactivity via regulation of CAMK2 activity in addition to regulation of left ventricular mass. Mediates the NLRP3 inflammasome in cardiomyocytes via acting as an inhibitor of the MAPK14/p38 and MAPK8/JNK pathways, thereby regulating ventricular remodeling and cardiac rhythm post-myocardial infarction. Negatively effects insulin sensitivity and promotes lipid formation in adipose tissues independent of CAMK2 signaling. In Homo sapiens (Human), this protein is Calcium/calmodulin-dependent protein kinase II inhibitor 1 (CAMK2N1).